A 427-amino-acid chain; its full sequence is 3-phosphoshikimate 1-carboxyvinyltransferase (427 aa).

3-phosphoshikimate-binding residues include Lys-20, Ser-21, and Arg-25. Lys-20 is a phosphoenolpyruvate binding site. 2 residues coordinate phosphoenolpyruvate: Gly-92 and Arg-120. 3-phosphoshikimate contacts are provided by Ser-166, Gln-168, Asp-312, and Lys-339. Gln-168 contributes to the phosphoenolpyruvate binding site. Asp-312 (proton acceptor) is an active-site residue. Residues Arg-343 and Arg-385 each contribute to the phosphoenolpyruvate site.

This sequence belongs to the EPSP synthase family. Monomer.

The protein resides in the cytoplasm. It catalyses the reaction 3-phosphoshikimate + phosphoenolpyruvate = 5-O-(1-carboxyvinyl)-3-phosphoshikimate + phosphate. It participates in metabolic intermediate biosynthesis; chorismate biosynthesis; chorismate from D-erythrose 4-phosphate and phosphoenolpyruvate: step 6/7. Catalyzes the transfer of the enolpyruvyl moiety of phosphoenolpyruvate (PEP) to the 5-hydroxyl of shikimate-3-phosphate (S3P) to produce enolpyruvyl shikimate-3-phosphate and inorganic phosphate. The chain is 3-phosphoshikimate 1-carboxyvinyltransferase from Streptococcus sanguinis (strain SK36).